Reading from the N-terminus, the 257-residue chain is Reticulon-like protein B4 (257 aa).

The interval 19–42 is disordered; sequence IHGHGDSSSLSDSDDDKKSTSSSS. Residues 68 to 257 enclose the Reticulon domain; that stretch reads PADIFLWRNK…PRGALNKKKD (190 aa). Transmembrane regions (helical) follow at residues 78 to 98, 99 to 119, and 173 to 193; these read KVSG…ELFE, YHLL…LFLW, and FILV…YNFL.

In terms of assembly, interacts with VirB2.

It is found in the endoplasmic reticulum membrane. Its function is as follows. Plays a role in the Agrobacterium-mediated plant transformation via its interaction with VirB2, the major component of the T-pilus. The chain is Reticulon-like protein B4 (RTNLB4) from Arabidopsis thaliana (Mouse-ear cress).